The sequence spans 249 residues: Tryptophan synthase alpha chain (249 aa).

Active-site proton acceptor residues include Glu43 and Asp54.

The protein belongs to the TrpA family. In terms of assembly, tetramer of two alpha and two beta chains.

It carries out the reaction (1S,2R)-1-C-(indol-3-yl)glycerol 3-phosphate + L-serine = D-glyceraldehyde 3-phosphate + L-tryptophan + H2O. Its pathway is amino-acid biosynthesis; L-tryptophan biosynthesis; L-tryptophan from chorismate: step 5/5. Functionally, the alpha subunit is responsible for the aldol cleavage of indoleglycerol phosphate to indole and glyceraldehyde 3-phosphate. In Campylobacter jejuni subsp. doylei (strain ATCC BAA-1458 / RM4099 / 269.97), this protein is Tryptophan synthase alpha chain.